The following is a 273-amino-acid chain: Rho GTPase-activating protein gacB (273 aa).

Residues 1-192 form the Rho-GAP domain; sequence MTDQTLRLEN…YLISHFNEIF (192 aa).

It localises to the cytoplasm. Its function is as follows. Rho GTPase-activating protein involved in the signal transduction pathway. This Dictyostelium discoideum (Social amoeba) protein is Rho GTPase-activating protein gacB (gacB).